The chain runs to 183 residues: COMM domain-containing protein 8 (183 aa).

The 68-residue stretch at 116–183 folds into the COMM domain; sequence QLQDFDWQVK…AANKVVLQLK (68 aa).

It belongs to the COMM domain-containing protein 8 family. As to quaternary structure, component of the commander complex consisting of the CCC subcomplex and the retriever subcomplex. Component of the CCC (COMMD/CCDC22/CCDC93) subcomplex consisting of COMMD1, COMMD2, COMMD3, COMMD4, COMMD5, COMMD6, COMMD7, COMMD8, COMMD9, COMMD10, CCDC22 and CCDC93; within the complex forms a heterodimer with COMMD4. Interacts with RELA, RELB, NFKB1/p105. Interacts with CCDC22, CCDC93, SCNN1B, CUL1, CUL2, CUL3, CUL4A, CUL4B, CUL5. Widely expressed with highest expression in thyroid.

The protein resides in the cytoplasm. Its subcellular location is the nucleus. Functionally, scaffold protein in the commander complex that is essential for endosomal recycling of transmembrane cargos; the commander complex is composed of the CCC subcomplex and the retriever subcomplex. May modulate activity of cullin-RING E3 ubiquitin ligase (CRL) complexes. May down-regulate activation of NF-kappa-B. In Homo sapiens (Human), this protein is COMM domain-containing protein 8 (COMMD8).